Reading from the N-terminus, the 581-residue chain is FAD-linked oxidoreductase easE (581 aa).

The signal sequence occupies residues 1–25 (MYRLLGPLACLALAWFFTWAPSGRC). Asparagine 44 and asparagine 73 each carry an N-linked (GlcNAc...) asparagine glycan. An FAD-binding PCMH-type domain is found at 122–306 (HQGRIPLYSA…AQATIRVFPD (185 aa)). Asparagine 369 is a glycosylation site (N-linked (GlcNAc...) asparagine).

The protein belongs to the oxygen-dependent FAD-linked oxidoreductase family. FAD is required as a cofactor.

The protein operates within alkaloid biosynthesis; ergot alkaloid biosynthesis. Functionally, FAD-linked oxidoreductase; part of the gene cluster that mediates the biosynthesis of fungal ergot alkaloid. DmaW catalyzes the first step of ergot alkaloid biosynthesis by condensing dimethylallyl diphosphate (DMAP) and tryptophan to form 4-dimethylallyl-L-tryptophan. The second step is catalyzed by the methyltransferase easF that methylates 4-dimethylallyl-L-tryptophan in the presence of S-adenosyl-L-methionine, resulting in the formation of 4-dimethylallyl-L-abrine. The catalase easC and the FAD-dependent oxidoreductase easE then transform 4-dimethylallyl-L-abrine to chanoclavine-I which is further oxidized by easD in the presence of NAD(+), resulting in the formation of chanoclavine-I aldehyde. Agroclavine dehydrogenase easG then mediates the conversion of chanoclavine-I aldehyde to agroclavine via a non-enzymatic adduct reaction: the substrate is an iminium intermediate that is formed spontaneously from chanoclavine-I aldehyde in the presence of glutathione. Further conversion of agroclavine to paspalic acid is a two-step process involving oxidation of agroclavine to elymoclavine and of elymoclavine to paspalic acid, the second step being performed by the elymoclavine oxidase cloA. However, cloA does not encode a functional enzyme indicating that C.fusiformis terminates its ergot alkaloid pathway at elymoclavine. This is FAD-linked oxidoreductase easE from Claviceps fusiformis (Ergot fungus).